We begin with the raw amino-acid sequence, 374 residues long: MSKRDYYDVLGVAKDADKKDIKKAYRSLANKYHPDKNPDNPEALDKFKELAEAYEILSSDDKRAAYDRFGHDGVNGQAGGYGGAGAGGFSDIFGDVFGDIFGGGGGGQSRTRRGSDLRYTLELDLEQAVWGCEEKIRIPTLVNCKTCDGSGAKKGSTPKTCGTCGGAGQVRMSQGFFSVQQTCPECHGAGQVISDPCRDCHGQGRVQEYKTLNVKIPAGVDTGDRIRLSGEGEAGTHGGPAGDLFVQVSVKPHSIFERDGANLYCEVPISFTTAALGGEIDVPTLDGRVRLKVTAECQSGKLFRLRNKGVKPVRGGPVGDLICKVVVETPVNLTSRQKELFTELAESMGEGTDHSPKQKSWFDGVKRFFDDIKK.

The J domain maps to 5 to 70; it reads DYYDVLGVAK…DKRAAYDRFG (66 aa). The CR-type zinc finger occupies 131-209; the sequence is GCEEKIRIPT…CHGQGRVQEY (79 aa). Cysteine 144, cysteine 147, cysteine 161, cysteine 164, cysteine 183, cysteine 186, cysteine 197, and cysteine 200 together coordinate Zn(2+). CXXCXGXG motif repeat units lie at residues 144 to 151, 161 to 168, 183 to 190, and 197 to 204; these read CKTCDGSG, CGTCGGAG, CPECHGAG, and CRDCHGQG.

This sequence belongs to the DnaJ family. Homodimer. It depends on Zn(2+) as a cofactor.

It localises to the cytoplasm. In terms of biological role, participates actively in the response to hyperosmotic and heat shock by preventing the aggregation of stress-denatured proteins and by disaggregating proteins, also in an autonomous, DnaK-independent fashion. Unfolded proteins bind initially to DnaJ; upon interaction with the DnaJ-bound protein, DnaK hydrolyzes its bound ATP, resulting in the formation of a stable complex. GrpE releases ADP from DnaK; ATP binding to DnaK triggers the release of the substrate protein, thus completing the reaction cycle. Several rounds of ATP-dependent interactions between DnaJ, DnaK and GrpE are required for fully efficient folding. Also involved, together with DnaK and GrpE, in the DNA replication of plasmids through activation of initiation proteins. This chain is Chaperone protein DnaJ, found in Marinomonas sp. (strain MWYL1).